The following is a 379-amino-acid chain: Cobalt-precorrin-5B C(1)-methyltransferase (379 aa).

The protein belongs to the CbiD family.

It carries out the reaction Co-precorrin-5B + S-adenosyl-L-methionine = Co-precorrin-6A + S-adenosyl-L-homocysteine. It participates in cofactor biosynthesis; adenosylcobalamin biosynthesis; cob(II)yrinate a,c-diamide from sirohydrochlorin (anaerobic route): step 6/10. Catalyzes the methylation of C-1 in cobalt-precorrin-5B to form cobalt-precorrin-6A. This Klebsiella pneumoniae subsp. pneumoniae (strain ATCC 700721 / MGH 78578) protein is Cobalt-precorrin-5B C(1)-methyltransferase.